A 176-amino-acid chain; its full sequence is ATP synthase subunit d, mitochondrial (176 aa).

As to quaternary structure, F-type ATP synthases have 2 components, the catalytic core F(1) and the membrane-embedded component F(0), linked together by a central stalk and a peripheral stalk. The central stalk, also called rotor shaft, is often seen as part of F(1). The peripheral stalk is seen as part of F(0). F(0) contains the membrane channel next to the rotor. F-type ATP synthases form dimers but each monomer functions independently in ATP generation. The dimer consists of 17 different polypeptides: ATP1 (subunit alpha, 3 molecules per monomer, part of F(1)), ATP2 (subunit beta, 3 copies per monomer, part of F(1)), ATP3 (subunit gamma, part of the central stalk), ATP4 (subunit b, part of the peripheral stalk), ATP5/OSCP (subunit 5/OSCP, part of the peripheral stalk), ATP6 (subunit a, part of the peripheral stalk), ATP7 (subunit d, part of the peripheral stalk), ATP8 (subunit 8, part of the peripheral stalk), OLI1 (subunit c, part of the rotor, 10 molecules per monomer), ATP14 (subunit h, part of the peripheral stalk), ATP15 (subunit epsilon, part of the central stalk), ATP16 (subunit delta, part of the central stalk), ATP17 (subunit f, part of the peripheral stalk), ATP18 (subunit i/j, part of the peripheral stalk), ATP19 (subunit k, dimer-specific, at interface between monomers), ATP20 (subunit g, at interface between monomers), TIM11 (subunit e, at interface between monomers).

It localises to the mitochondrion inner membrane. Functionally, mitochondrial membrane ATP synthase (F(1)F(0) ATP synthase or Complex V) produces ATP from ADP in the presence of a proton gradient across the membrane which is generated by electron transport complexes of the respiratory chain. F-type ATP synthases consist of two structural domains, F(1) - containing the extramembraneous catalytic core, and F(0) - containing the membrane proton channel, linked together by a central stalk and a peripheral stalk. During catalysis, ATP synthesis in the catalytic domain of F(1) is coupled via a rotary mechanism of the central stalk subunits to proton translocation. Part of the complex F(0) domain and the peripheral stalk, which acts as a stator to hold the catalytic alpha/ATP1(3)beta/ATP2(3) subcomplex and subunit a/ATP6 static relative to the rotary elements. This chain is ATP synthase subunit d, mitochondrial, found in Yarrowia lipolytica (strain CLIB 122 / E 150) (Yeast).